Reading from the N-terminus, the 413-residue chain is Serine hydroxymethyltransferase (413 aa).

Residues Leu-119 and 123-125 (GHL) each bind (6S)-5,6,7,8-tetrahydrofolate. An N6-(pyridoxal phosphate)lysine modification is found at Lys-228. A (6S)-5,6,7,8-tetrahydrofolate-binding site is contributed by 351-353 (SPF).

It belongs to the SHMT family. In terms of assembly, homodimer. The cofactor is pyridoxal 5'-phosphate.

Its subcellular location is the cytoplasm. It catalyses the reaction (6R)-5,10-methylene-5,6,7,8-tetrahydrofolate + glycine + H2O = (6S)-5,6,7,8-tetrahydrofolate + L-serine. It functions in the pathway one-carbon metabolism; tetrahydrofolate interconversion. It participates in amino-acid biosynthesis; glycine biosynthesis; glycine from L-serine: step 1/1. Its function is as follows. Catalyzes the reversible interconversion of serine and glycine with tetrahydrofolate (THF) serving as the one-carbon carrier. This reaction serves as the major source of one-carbon groups required for the biosynthesis of purines, thymidylate, methionine, and other important biomolecules. Also exhibits THF-independent aldolase activity toward beta-hydroxyamino acids, producing glycine and aldehydes, via a retro-aldol mechanism. This Clostridium botulinum (strain ATCC 19397 / Type A) protein is Serine hydroxymethyltransferase.